The chain runs to 640 residues: 1-deoxy-D-xylulose-5-phosphate synthase (640 aa).

Thiamine diphosphate-binding positions include histidine 72 and 113-115 (GHA). Aspartate 144 contributes to the Mg(2+) binding site. Residues 145 to 146 (GA), asparagine 174, tyrosine 287, and glutamate 370 contribute to the thiamine diphosphate site. Asparagine 174 contacts Mg(2+).

The protein belongs to the transketolase family. DXPS subfamily. As to quaternary structure, homodimer. It depends on Mg(2+) as a cofactor. The cofactor is thiamine diphosphate.

The catalysed reaction is D-glyceraldehyde 3-phosphate + pyruvate + H(+) = 1-deoxy-D-xylulose 5-phosphate + CO2. The protein operates within metabolic intermediate biosynthesis; 1-deoxy-D-xylulose 5-phosphate biosynthesis; 1-deoxy-D-xylulose 5-phosphate from D-glyceraldehyde 3-phosphate and pyruvate: step 1/1. Catalyzes the acyloin condensation reaction between C atoms 2 and 3 of pyruvate and glyceraldehyde 3-phosphate to yield 1-deoxy-D-xylulose-5-phosphate (DXP). The polypeptide is 1-deoxy-D-xylulose-5-phosphate synthase (Synechococcus sp. (strain RCC307)).